The following is a 138-amino-acid chain: Basic phospholipase A2 homolog TM-N49 (138 aa).

The signal sequence occupies residues 1–16 (MRTLWIMAVLLLGVEG). 7 disulfides stabilise this stretch: Cys-42–Cys-131, Cys-44–Cys-60, Cys-59–Cys-111, Cys-65–Cys-138, Cys-66–Cys-104, Cys-73–Cys-97, and Cys-91–Cys-102.

It belongs to the phospholipase A2 family. Group II subfamily. N49 sub-subfamily. In terms of assembly, homodimer; non-covalently linked. Expressed by the venom gland.

The protein resides in the secreted. Its function is as follows. Snake venom phospholipase A2 (PLA2) that exhibits potent myotoxic activity causing inflammatory cell infiltration, severe myoedema, myonecrosis and myolysis in the gastrocnemius muscles of BALB/c mice. The sequence is that of Basic phospholipase A2 homolog TM-N49 from Protobothrops mucrosquamatus (Taiwan habu).